Consider the following 279-residue polypeptide: Large ribosomal subunit protein uL2 (279 aa).

Disordered regions lie at residues 34 to 58 (LRPLHKTGGRNNTGRITTRHKGGGH) and 225 to 279 (VMNP…KNKR). Residues 251 to 268 (GKPEGRTRRPNKESDKLI) are compositionally biased toward basic and acidic residues. Over residues 269–279 (VRRRRTGKNKR) the composition is skewed to basic residues.

It belongs to the universal ribosomal protein uL2 family. As to quaternary structure, part of the 50S ribosomal subunit. Forms a bridge to the 30S subunit in the 70S ribosome.

In terms of biological role, one of the primary rRNA binding proteins. Required for association of the 30S and 50S subunits to form the 70S ribosome, for tRNA binding and peptide bond formation. It has been suggested to have peptidyltransferase activity; this is somewhat controversial. Makes several contacts with the 16S rRNA in the 70S ribosome. The chain is Large ribosomal subunit protein uL2 from Micrococcus luteus (strain ATCC 4698 / DSM 20030 / JCM 1464 / CCM 169 / CCUG 5858 / IAM 1056 / NBRC 3333 / NCIMB 9278 / NCTC 2665 / VKM Ac-2230) (Micrococcus lysodeikticus).